A 119-amino-acid polypeptide reads, in one-letter code: Protein yippee-like 3 (119 aa).

One can recognise a Yippee domain in the interval 19 to 116 (RRYSCAHCRA…IELNHMIKDN (98 aa)). Zn(2+)-binding residues include cysteine 23, cysteine 26, cysteine 79, and cysteine 82.

The protein belongs to the yippee family. Post-translationally, probably ubiquitinated leading to its degradation by the proteasome.

It localises to the nucleus. The protein resides in the nucleolus. Its function is as follows. Involved in proliferation and apoptosis in myeloid precursor cells. The polypeptide is Protein yippee-like 3 (YPEL3) (Bos taurus (Bovine)).